A 140-amino-acid polypeptide reads, in one-letter code: Nucleoside diphosphate kinase (140 aa).

ATP contacts are provided by lysine 11, phenylalanine 59, arginine 87, threonine 93, arginine 104, and asparagine 114. The Pros-phosphohistidine intermediate role is filled by histidine 117.

This sequence belongs to the NDK family. In terms of assembly, homotetramer. The cofactor is Mg(2+).

The protein localises to the cytoplasm. The catalysed reaction is a 2'-deoxyribonucleoside 5'-diphosphate + ATP = a 2'-deoxyribonucleoside 5'-triphosphate + ADP. The enzyme catalyses a ribonucleoside 5'-diphosphate + ATP = a ribonucleoside 5'-triphosphate + ADP. Major role in the synthesis of nucleoside triphosphates other than ATP. The ATP gamma phosphate is transferred to the NDP beta phosphate via a ping-pong mechanism, using a phosphorylated active-site intermediate. This is Nucleoside diphosphate kinase from Sinorhizobium fredii (strain NBRC 101917 / NGR234).